Here is an 83-residue protein sequence, read N- to C-terminus: Carboxysome shell vertex protein CsoS4A (83 aa).

Residues 1–78 (MKIMQVEKTL…SDLTIIGIID (78 aa)) enclose the BMV domain.

This sequence belongs to the CcmL/EutN family. CsoS4 subfamily. As to quaternary structure, homopentamer.

Its subcellular location is the carboxysome. Its function is as follows. Probably forms vertices in the carboxysome, a polyhedral inclusion where RuBisCO (ribulose bisphosphate carboxylase, cbbL-cbbS) is sequestered. Has been modeled to induce curvature upon insertion into an otherwise flat hexagonal layer of major carboxysome subunits. A minor shell protein, only 12 pentamers of CsoS4A/CsoS4B are calculated to be present in each carboxysome. The 2 CsoS4 proteins contribute to the impermeability of the carboxysome to CO(2). Functionally, unlike beta-carboxysomes, alpha-carboxysomes (Cb) can form without cargo protein. CsoS2 is essential for Cb formation and is also capable of targeting foreign proteins to the Cb. The Cb shell assembles with the aid of CsoS2; CsoS1A, CsoS1B and CsoS1C form the majority of the shell while CsoS4A and CsoS4B form vertices. CsoS1D forms pseudohexamers that probably control metabolite flux into and out of the shell. The chain is Carboxysome shell vertex protein CsoS4A from Halothiobacillus neapolitanus (strain ATCC 23641 / c2) (Thiobacillus neapolitanus).